We begin with the raw amino-acid sequence, 352 residues long: 3-isopropylmalate dehydrogenase (352 aa).

71 to 87 (GAHDSAWNQLPRHLRPE) provides a ligand contact to NAD(+). Substrate is bound by residues Arg-94, Arg-104, Arg-132, and Asp-218. Residues Asp-218, Asp-242, and Asp-246 each contribute to the Mg(2+) site. 275–287 (GSAPDIAGQGVAN) contacts NAD(+).

Belongs to the isocitrate and isopropylmalate dehydrogenases family. LeuB type 1 subfamily. Homodimer. The cofactor is Mg(2+). It depends on Mn(2+) as a cofactor.

Its subcellular location is the cytoplasm. It catalyses the reaction (2R,3S)-3-isopropylmalate + NAD(+) = 4-methyl-2-oxopentanoate + CO2 + NADH. It functions in the pathway amino-acid biosynthesis; L-leucine biosynthesis; L-leucine from 3-methyl-2-oxobutanoate: step 3/4. Catalyzes the oxidation of 3-carboxy-2-hydroxy-4-methylpentanoate (3-isopropylmalate) to 3-carboxy-4-methyl-2-oxopentanoate. The product decarboxylates to 4-methyl-2 oxopentanoate. The chain is 3-isopropylmalate dehydrogenase from Deinococcus radiodurans (strain ATCC 13939 / DSM 20539 / JCM 16871 / CCUG 27074 / LMG 4051 / NBRC 15346 / NCIMB 9279 / VKM B-1422 / R1).